Reading from the N-terminus, the 355-residue chain is MKFGNFLLTYQPPELSQTEVMKRLVNLGKASEGCGFDTVWLLEHHFTEFGLLGNPYVAAAHLLGATETLNVGTAAIVLPTAHPVRQAEDVNLLDQMSKGRFRFGICRGLYDKDFRVFGTDMDNSRALMDCWYDLMKEGFNEGYIAADNEHIKFPKIQLNPSAYTQGGAPVYVVAESASTTEWAAERGLPMILSWIINTHEKKAQLDLYNEVATEHGYDVTKIDHCLSYITSVDHDSNRAKDICRNFLGHWYDSYVNATKIFDDSDQTKGYDFNKGQWRDFVLKGHKDTNRRIDYSYEINPVGTPEECIAIIQQDIDATGIDNICCGFEANGSEEEIIASMKLFQSDVMPYLKEKQ.

It belongs to the bacterial luciferase oxidoreductase family. In terms of assembly, heterodimer of an alpha and a beta chain.

It carries out the reaction a long-chain fatty aldehyde + FMNH2 + O2 = a long-chain fatty acid + hnu + FMN + H2O + 2 H(+). Its function is as follows. Light-emitting reaction in luminous bacteria. The protein is Alkanal monooxygenase alpha chain (luxA) of Vibrio harveyi (Beneckea harveyi).